The chain runs to 466 residues: MENTRRSFLKKVSAAGIGAAGLAMAGNAGATTTAAEPQKKKTAGKDDGKLRFGFIGTGSRCHEHINNVLAIPGNKIVAICDIQQGPIDSTLKHIAKFNVPAPKVYKGGEREFENMLNNEEFDCVIIASPWEWHVPMSVAAMKAGVPYVGVEVSAANTLEECWDLVNVSEATGSHLNIMENVCYRRDCMAALNMVRQGLFGEILHGGCGYEHDLREVKFNDGTHYNYVPGSGDLRMGPTAFAEAQWRTNHSVHRNGDIYPTHGIGPIAHCMDINRGNRFLSLSAMATQSRGLHKFIVDNGGENHPLAKVNFNLGDIVTSMIKCSNGQTIIVTHDTNSPRPYSLGFRVQGTEGLWMNDGDHVYVQGKSKPHRWDDSDEWFKKYDHKLWASLESQAAEAGHGGMDYIMMYDLIDAIRNKKPAPMDCYDAAAWSAISGLSEMSIARGGALVDFPDFTRGQWIHRQPQFAL.

A signal peptide (tat-type signal) is located at residues methionine 1–alanine 30. Residues serine 59–arginine 60, aspartate 81, tryptophan 130–histidine 133, glutamate 151–valine 152, and asparagine 180 each bind NAD(+). Position 209 (tyrosine 209) interacts with substrate. An NAD(+)-binding site is contributed by alanine 241 to tryptophan 245. Substrate is bound by residues arginine 246, tyrosine 258 to histidine 261, and tyrosine 340. Tyrosine 258 is a binding site for NAD(+).

It belongs to the Gfo/Idh/MocA family. Glycosyl hydrolase 109 subfamily. It depends on NAD(+) as a cofactor. Post-translationally, predicted to be exported by the Tat system. The position of the signal peptide cleavage has not been experimentally proven.

Its function is as follows. Glycosidase. The protein is Glycosyl hydrolase family 109 protein of Parabacteroides distasonis (strain ATCC 8503 / DSM 20701 / CIP 104284 / JCM 5825 / NCTC 11152).